Consider the following 408-residue polypeptide: MTDRNIQVQSLDRSAVEDDAVEIVERKGLGHPDSICDGIAEHVCETLAREYRDRVGHVLHFNTDETQLVAGDAAPAFGGGNVIDPIYILVVGRATSHYVEADGTEHHIPVESIALEAAREYLRETLPHLDLETDVIVDVKLGEGSGDLQDVFTDDDDGPAVPMANDTSFGVGHAPLTETERIVLEAERSLNGPYAEHTPAVGEDVKVMGKREDDHIDLTIAAALVDAHVPDMDAYIAQVEAIREHVFDLATEHTDREVTVHVNTADDYESGSIYLTTTGTSAEQGDDGSVGRGNRANGLITPNRAMSMEATSGKNPVNHIGKIYNLLSTQIAEAVVAEVDGIRDLRVRLLSQIGRPIDEPHVADVEVVTEDGTAVADVDAEIERIVDAQLASVTDLTRRVIDGERTTF.

An ATP-binding site is contributed by 142 to 147; sequence GEGSGD.

It belongs to the AdoMet synthase 2 family. It depends on Mg(2+) as a cofactor.

It catalyses the reaction L-methionine + ATP + H2O = S-adenosyl-L-methionine + phosphate + diphosphate. The protein operates within amino-acid biosynthesis; S-adenosyl-L-methionine biosynthesis; S-adenosyl-L-methionine from L-methionine: step 1/1. Catalyzes the formation of S-adenosylmethionine from methionine and ATP. This chain is S-adenosylmethionine synthase, found in Halobacterium salinarum (strain ATCC 29341 / DSM 671 / R1).